The following is a 319-amino-acid chain: Beta-ketoacyl-[acyl-carrier-protein] synthase III (319 aa).

Catalysis depends on residues Cys115 and His246. An ACP-binding region spans residues 247–251 (QANLR). The active site involves Asn276.

It belongs to the thiolase-like superfamily. FabH family. Homodimer.

The protein resides in the cytoplasm. The enzyme catalyses malonyl-[ACP] + acetyl-CoA + H(+) = 3-oxobutanoyl-[ACP] + CO2 + CoA. Its pathway is lipid metabolism; fatty acid biosynthesis. In terms of biological role, catalyzes the condensation reaction of fatty acid synthesis by the addition to an acyl acceptor of two carbons from malonyl-ACP. Catalyzes the first condensation reaction which initiates fatty acid synthesis and may therefore play a role in governing the total rate of fatty acid production. Possesses both acetoacetyl-ACP synthase and acetyl transacylase activities. Its substrate specificity determines the biosynthesis of branched-chain and/or straight-chain of fatty acids. This Coxiella burnetii (strain Dugway 5J108-111) protein is Beta-ketoacyl-[acyl-carrier-protein] synthase III.